We begin with the raw amino-acid sequence, 164 residues long: Small ribosomal subunit protein uS5 (164 aa).

The S5 DRBM domain occupies 10–73; it reads IEERVVAINR…ESAKKNMIEV (64 aa).

It belongs to the universal ribosomal protein uS5 family. As to quaternary structure, part of the 30S ribosomal subunit. Contacts proteins S4 and S8.

Its function is as follows. With S4 and S12 plays an important role in translational accuracy. In terms of biological role, located at the back of the 30S subunit body where it stabilizes the conformation of the head with respect to the body. The polypeptide is Small ribosomal subunit protein uS5 (Streptococcus suis (strain 98HAH33)).